We begin with the raw amino-acid sequence, 327 residues long: MKKIAIDLMGGDYAPEEILAGALSFAKENEDVELYLVGIEENFKDVQLPKNCVKVVTDDFLPMDVKPTEAVRRRKSTMYVSCQLAREKKVDAVVSAGNTGALLACATFVVGRIKGIERPTLAVPIPTKNDFCVLADAGANIDVKPSNLLQFAIMGVEYAKLLGKDNPTIGLLNVGTEENKGTQKEKEAFQILKERFGNQFVGNVEGNDLNAGKVDVVVADGFHGNIAMKTMEGAAKMITELIKSEVKKNIISALGALLMKPVFSSLKNKLDPKKYGGTFFIGVEGVVVKAHGNSNRTAIFNALKVAKKGVEEKLPLKIKEALLKCAE.

This sequence belongs to the PlsX family. In terms of assembly, homodimer. Probably interacts with PlsY.

The protein resides in the cytoplasm. The enzyme catalyses a fatty acyl-[ACP] + phosphate = an acyl phosphate + holo-[ACP]. It participates in lipid metabolism; phospholipid metabolism. Its function is as follows. Catalyzes the reversible formation of acyl-phosphate (acyl-PO(4)) from acyl-[acyl-carrier-protein] (acyl-ACP). This enzyme utilizes acyl-ACP as fatty acyl donor, but not acyl-CoA. This chain is Phosphate acyltransferase, found in Thermosipho africanus (strain TCF52B).